A 160-amino-acid chain; its full sequence is SsrA-binding protein (160 aa).

The interval 136 to 160 (KRDTMRERDSNRELQRAVRNKGKED) is disordered.

This sequence belongs to the SmpB family.

It is found in the cytoplasm. In terms of biological role, required for rescue of stalled ribosomes mediated by trans-translation. Binds to transfer-messenger RNA (tmRNA), required for stable association of tmRNA with ribosomes. tmRNA and SmpB together mimic tRNA shape, replacing the anticodon stem-loop with SmpB. tmRNA is encoded by the ssrA gene; the 2 termini fold to resemble tRNA(Ala) and it encodes a 'tag peptide', a short internal open reading frame. During trans-translation Ala-aminoacylated tmRNA acts like a tRNA, entering the A-site of stalled ribosomes, displacing the stalled mRNA. The ribosome then switches to translate the ORF on the tmRNA; the nascent peptide is terminated with the 'tag peptide' encoded by the tmRNA and targeted for degradation. The ribosome is freed to recommence translation, which seems to be the essential function of trans-translation. This Pseudomonas putida (strain GB-1) protein is SsrA-binding protein.